We begin with the raw amino-acid sequence, 440 residues long: Chromosome partition protein MukF (440 aa).

The leucine-zipper stretch occupies residues 208 to 236 (LSETSGTLRELQDTLEAAGDKLQANLLRI).

The protein belongs to the MukF family. Interacts, and probably forms a ternary complex, with MukE and MukB via its C-terminal region. The complex formation is stimulated by calcium or magnesium. It is required for an interaction between MukE and MukB.

Its subcellular location is the cytoplasm. It localises to the nucleoid. Its function is as follows. Involved in chromosome condensation, segregation and cell cycle progression. May participate in facilitating chromosome segregation by condensation DNA from both sides of a centrally located replisome during cell division. Not required for mini-F plasmid partitioning. Probably acts via its interaction with MukB and MukE. Overexpression results in anucleate cells. It has a calcium binding activity. The sequence is that of Chromosome partition protein MukF from Citrobacter koseri (strain ATCC BAA-895 / CDC 4225-83 / SGSC4696).